Here is a 252-residue protein sequence, read N- to C-terminus: MLKMRIIPCLDVKDGRVVKGVNFVGLRDAGDPVEQARLYDAAGADELCFLDITASHENRDTLLDVVGRTADQCFMPLTVGGGVRTTEDIRKLLLAGADKVSINTAAVTRPEFVREAAETFGAQCVVVALDAKSVGPGRFEIFTHGGRKATGLDAVDWAKRMVALGAGEILLTSMDRDGTRQGFNLPLTRAIADAVAVPVIASGGVGTLDHLVEGVRDGHATAVLAASIFHFGEYTIAQAKAHMAAAGLPMRL.

Catalysis depends on residues D11 and D130.

The protein belongs to the HisA/HisF family. In terms of assembly, heterodimer of HisH and HisF.

Its subcellular location is the cytoplasm. The catalysed reaction is 5-[(5-phospho-1-deoxy-D-ribulos-1-ylimino)methylamino]-1-(5-phospho-beta-D-ribosyl)imidazole-4-carboxamide + L-glutamine = D-erythro-1-(imidazol-4-yl)glycerol 3-phosphate + 5-amino-1-(5-phospho-beta-D-ribosyl)imidazole-4-carboxamide + L-glutamate + H(+). Its pathway is amino-acid biosynthesis; L-histidine biosynthesis; L-histidine from 5-phospho-alpha-D-ribose 1-diphosphate: step 5/9. In terms of biological role, IGPS catalyzes the conversion of PRFAR and glutamine to IGP, AICAR and glutamate. The HisF subunit catalyzes the cyclization activity that produces IGP and AICAR from PRFAR using the ammonia provided by the HisH subunit. This Rhodospirillum rubrum (strain ATCC 11170 / ATH 1.1.1 / DSM 467 / LMG 4362 / NCIMB 8255 / S1) protein is Imidazole glycerol phosphate synthase subunit HisF.